The primary structure comprises 331 residues: DNA-directed RNA polymerase subunit alpha (331 aa).

The tract at residues 1 to 226 (MLIAQRPTLT…ELFGLCRELN (226 aa)) is alpha N-terminal domain (alpha-NTD). The tract at residues 243-331 (TNPEMAVPIE…GGTFFSPEDE (89 aa)) is alpha C-terminal domain (alpha-CTD).

It belongs to the RNA polymerase alpha chain family. In terms of assembly, homodimer. The RNAP catalytic core consists of 2 alpha, 1 beta, 1 beta' and 1 omega subunit. When a sigma factor is associated with the core the holoenzyme is formed, which can initiate transcription.

It carries out the reaction RNA(n) + a ribonucleoside 5'-triphosphate = RNA(n+1) + diphosphate. Functionally, DNA-dependent RNA polymerase catalyzes the transcription of DNA into RNA using the four ribonucleoside triphosphates as substrates. The polypeptide is DNA-directed RNA polymerase subunit alpha (Bifidobacterium longum (strain NCC 2705)).